We begin with the raw amino-acid sequence, 139 residues long: D-ribose pyranase (139 aa).

His-20 functions as the Proton donor in the catalytic mechanism. Substrate-binding positions include Asp-28, His-106, and 128 to 130 (YAN).

It belongs to the RbsD / FucU family. RbsD subfamily. Homodecamer.

The protein localises to the cytoplasm. It catalyses the reaction beta-D-ribopyranose = beta-D-ribofuranose. It functions in the pathway carbohydrate metabolism; D-ribose degradation; D-ribose 5-phosphate from beta-D-ribopyranose: step 1/2. Its function is as follows. Catalyzes the interconversion of beta-pyran and beta-furan forms of D-ribose. This is D-ribose pyranase from Edwardsiella ictaluri (strain 93-146).